The following is a 116-amino-acid chain: Holo-[acyl-carrier-protein] synthase (116 aa).

Mg(2+) contacts are provided by D5 and E50.

Belongs to the P-Pant transferase superfamily. AcpS family. Mg(2+) is required as a cofactor.

Its subcellular location is the cytoplasm. The enzyme catalyses apo-[ACP] + CoA = holo-[ACP] + adenosine 3',5'-bisphosphate + H(+). Transfers the 4'-phosphopantetheine moiety from coenzyme A to a Ser of acyl-carrier-protein. This is Holo-[acyl-carrier-protein] synthase from Nitratiruptor sp. (strain SB155-2).